Consider the following 546-residue polypeptide: MAAKDVKFGRTAREKMLRGVDILADAVKVTLGPKGRNVVIEKSFGAPRITKDGVSVAKEVELEDKFENMGAQMLREVASKTNDTAGDGTTTATVLGQAIVQEGAKAVAAGMNPMDLKRGIDLAVNEVVAELLKKAKKINTSEEVAQVGTISANGEAEIGKMIAEAMQKVGNEGVITVEEAKTAETELEVVEGMQFDRGYLSPYFVTNPEKMVADLEDAYILLHEKKLSNLQALLPVLEAVVQTSKPLLIIAEDVEGEALATLVVNKLRGGLKIAAVKAPGFGDRRKAMLEDIAILTGGQVISEDLGIKLESVTLDMLGRAKKVSISKENTTIVDGAGQKAEIDARVGQIKQQIEETTSDYDREKLQERLAKLAGGVAVIRVGGATEVEVKEKKDRVDDALNATRAAVEEGIVAGGGTALLRASTKITAKGVNADQEAGINIVRRAIQAPARQITTNAGEEASVIVGKILENTSETFGYNTANGEYGDLISLGIVDPVKVVRTALQNAASVAGLLITTEAMIAELPKKDAAPAGMPGGMGGMGGMDF.

Residues 30 to 33 (TLGP), Lys51, 87 to 91 (DGTTT), Gly415, and Asp495 each bind ATP.

Belongs to the chaperonin (HSP60) family. In terms of assembly, forms a cylinder of 14 subunits composed of two heptameric rings stacked back-to-back. Interacts with the co-chaperonin GroES.

The protein resides in the cytoplasm. The catalysed reaction is ATP + H2O + a folded polypeptide = ADP + phosphate + an unfolded polypeptide.. Its function is as follows. Together with its co-chaperonin GroES, plays an essential role in assisting protein folding. The GroEL-GroES system forms a nano-cage that allows encapsulation of the non-native substrate proteins and provides a physical environment optimized to promote and accelerate protein folding. This Brucella melitensis biotype 2 (strain ATCC 23457) protein is Chaperonin GroEL.